Reading from the N-terminus, the 165-residue chain is Ubiquitin-like protein ISG15 (165 aa).

Ubiquitin-like domains lie at 2-78 and 79-157; these read GWDL…VDKC and DEPL…LRGG. C78 carries the post-translational modification S-nitrosocysteine; alternate. The LRLRGG motif lies at 152–157; it reads LRLRGG. An involved in the ligation of specific target proteins region spans residues 153 to 157; that stretch reads RLRGG. A Glycyl lysine isopeptide (Gly-Lys) (interchain with K-? in acceptor proteins) cross-link involves residue G157. A propeptide spans 158–165 (removed in mature form); that stretch reads GTEPGGRS.

As to quaternary structure, homodimer; disulfide-linked. Interacts with, and is conjugated to its targets by UBE1L (E1 enzyme) and UBE2E2 (E2 enzyme). Interacts with NEDD4. Interacts with PARP12; this interaction inhibits PINK1/Parkin-dependent mitophagy. In terms of assembly, (Microbial infection) Interacts with vaccinia virus protein E3. (Microbial infection) Interaction with influenza B NS1 protein inhibits its conjugation. As to quaternary structure, (Microbial infection) Interacts (via C-terminus) with Crimean-Congo hemorrhagic fever virus (CCHFV) RNA-directed RNA polymerase L (via N-terminus); the deISGylase activity of the viral protein interferes with antiviral signaling pathways mediated by NF-kappaB and IRF signalings. In terms of assembly, (Microbial infection) Interacts with human cytomegalovirus protein UL26; this interaction inhibits global protein ISGylation. Post-translationally, S-nitrosylation decreases its dimerization, thereby increasing the availability as well as the solubility of monomeric ISG15 for its conjugation to cellular proteins. In terms of processing, induced as an inactive, precursor protein that is cleaved by specific proteases to expose the C-terminal diglycine (LRLRGG) motif. This motif is essential not only for its conjugation to substrates but also for its recognition by the relevant processing proteases. As to expression, detected in lymphoid cells, striated and smooth muscle, several epithelia and neurons. Expressed in neutrophils, monocytes and lymphocytes. Enhanced expression seen in pancreatic adenocarcinoma, endometrial cancer, and bladder cancer, as compared to non-cancerous tissue. In bladder cancer, the increase in expression exhibits a striking positive correlation with more advanced stages of the disease.

It is found in the cytoplasm. The protein localises to the secreted. Functionally, ubiquitin-like protein which plays a key role in the innate immune response to viral infection either via its conjugation to a target protein (ISGylation) or via its action as a free or unconjugated protein. ISGylation involves a cascade of enzymatic reactions involving E1, E2, and E3 enzymes which catalyze the conjugation of ISG15 to a lysine residue in the target protein. Its target proteins include IFIT1, MX1/MxA, PPM1B, UBE2L6, UBA7, CHMP5, CHMP2A, CHMP4B and CHMP6. Isgylation of the viral sensor IFIH1/MDA5 promotes IFIH1/MDA5 oligomerization and triggers activation of innate immunity against a range of viruses, including coronaviruses, flaviviruses and picornaviruses. Can also isgylate: EIF2AK2/PKR which results in its activation, RIGI which inhibits its function in antiviral signaling response, EIF4E2 which enhances its cap structure-binding activity and translation-inhibition activity, UBE2N and UBE2E1 which negatively regulates their activity, IRF3 which inhibits its ubiquitination and degradation and FLNB which prevents its ability to interact with the upstream activators of the JNK cascade thereby inhibiting IFNA-induced JNK signaling. Exhibits antiviral activity towards both DNA and RNA viruses, including influenza A, HIV-1 and Ebola virus. Restricts HIV-1 and ebola virus via disruption of viral budding. Inhibits the ubiquitination of HIV-1 Gag and host TSG101 and disrupts their interaction, thereby preventing assembly and release of virions from infected cells. Inhibits Ebola virus budding mediated by the VP40 protein by disrupting ubiquitin ligase activity of NEDD4 and its ability to ubiquitinate VP40. ISGylates influenza A virus NS1 protein which causes a loss of function of the protein and the inhibition of virus replication. The secreted form of ISG15 can: induce natural killer cell proliferation, act as a chemotactic factor for neutrophils and act as a IFN-gamma-inducing cytokine playing an essential role in antimycobacterial immunity. The secreted form acts through the integrin ITGAL/ITGB2 receptor to initiate activation of SRC family tyrosine kinases including LYN, HCK and FGR which leads to secretion of IFNG and IL10; the interaction is mediated by ITGAL. The chain is Ubiquitin-like protein ISG15 from Homo sapiens (Human).